A 239-amino-acid chain; its full sequence is N-glycosylase/DNA lyase (239 aa).

Positions 24, 51, and 62 each coordinate 8-oxoguanine. The helix-hairpin-helix stretch occupies residues 118–182 (ERYYEDMTLL…EDVRIIKLTR (65 aa)). Lys-142 (schiff-base intermediate with DNA) is an active-site residue. 2 residues coordinate 8-oxoguanine: Phe-146 and Pro-172. Asp-174 is an active-site residue. 8-oxoguanine contacts are provided by Asp-208 and Trp-212.

Belongs to the archaeal N-glycosylase/DNA lyase (AGOG) family.

It carries out the reaction 2'-deoxyribonucleotide-(2'-deoxyribose 5'-phosphate)-2'-deoxyribonucleotide-DNA = a 3'-end 2'-deoxyribonucleotide-(2,3-dehydro-2,3-deoxyribose 5'-phosphate)-DNA + a 5'-end 5'-phospho-2'-deoxyribonucleoside-DNA + H(+). DNA repair enzyme that is part of the base excision repair (BER) pathway; protects from oxidative damage by removing the major product of DNA oxidation, 8-oxoguanine (GO), from single- and double-stranded DNA substrates. In Pyrococcus horikoshii (strain ATCC 700860 / DSM 12428 / JCM 9974 / NBRC 100139 / OT-3), this protein is N-glycosylase/DNA lyase.